The sequence spans 133 residues: Nickel-responsive regulator (133 aa).

Ni(2+) is bound by residues H76, H87, H89, and C95.

The protein belongs to the transcriptional regulatory CopG/NikR family. Homotetramer. It depends on Ni(2+) as a cofactor.

In terms of biological role, transcriptional repressor of the nikABCDE operon. Is active in the presence of excessive concentrations of intracellular nickel. This is Nickel-responsive regulator from Enterobacter sp. (strain 638).